Here is a 587-residue protein sequence, read N- to C-terminus: Bifunctional lycopene cyclase/phytoene synthase (587 aa).

The segment at 1–242 is lycopene beta-cyclase; that stretch reads MGYDYALVHV…IVFGIAAFDK (242 aa). A run of 7 helical transmembrane segments spans residues 8 to 28, 35 to 55, 77 to 97, 120 to 140, 150 to 170, 172 to 192, and 220 to 240; these read VHVKYTIPLAALLTVFSYPVF, RTLFIVTIAFVATIPWDSYLI, AEELFFFIIQTYITAQLYIIL, GKLVGQLALSGSVLLGTWLIA, LILVWACTFALFTWTITAHFL, ALPLACTALPILLPTVYLWIV, and IEEATFFLVTNMLIVFGIAAF. The tract at residues 249–587 is phytoene synthase; the sequence is AFPEKFDKPA…WVAWSTLMAA (339 aa).

In the N-terminal section; belongs to the lycopene beta-cyclase family. It in the C-terminal section; belongs to the phytoene/squalene synthase family.

It localises to the membrane. It carries out the reaction all-trans-lycopene = gamma-carotene. It catalyses the reaction gamma-carotene = all-trans-beta-carotene. The catalysed reaction is 2 (2E,6E,10E)-geranylgeranyl diphosphate = 15-cis-phytoene + 2 diphosphate. It participates in carotenoid biosynthesis; beta-carotene biosynthesis. It functions in the pathway carotenoid biosynthesis; phytoene biosynthesis; all-trans-phytoene from geranylgeranyl diphosphate: step 1/1. In terms of biological role, bifunctional enzyme that catalyzes the reactions from geranylgeranyl diphosphate to phytoene (phytoene synthase) and lycopene to beta-carotene via the intermediate gamma-carotene (lycopene cyclase). This Colletotrichum graminicola (strain M1.001 / M2 / FGSC 10212) (Maize anthracnose fungus) protein is Bifunctional lycopene cyclase/phytoene synthase.